A 5202-amino-acid polypeptide reads, in one-letter code: Usherin (5202 aa).

Residues 1 to 31 form the signal peptide; the sequence is MNCPVLSLGSGFLFQVIEMLIFAYFASISLT. Residues 32-5042 lie on the Extracellular side of the membrane; sequence ESRGLFPRLE…KSTEFYSELW (5011 aa). The region spanning 271-517 is the Laminin N-terminal domain; the sequence is QDFRLYQVAL…AVDEITISGR (247 aa). Asn361 and Asn451 each carry an N-linked (GlcNAc...) asparagine glycan. Intrachain disulfides connect Cys518–Cys527, Cys520–Cys536, Cys538–Cys549, Cys552–Cys572, Cys575–Cys584, Cys577–Cys605, Cys608–Cys617, Cys620–Cys638, Cys641–Cys655, Cys643–Cys662, Cys664–Cys673, Cys676–Cys691, Cys694–Cys708, Cys696–Cys715, Cys717–Cys726, Cys729–Cys744, Cys747–Cys759, Cys749–Cys766, Cys768–Cys777, Cys780–Cys792, Cys795–Cys808, Cys797–Cys815, Cys817–Cys826, Cys829–Cys844, Cys847–Cys861, Cys849–Cys868, Cys870–Cys879, Cys882–Cys897, Cys900–Cys913, Cys902–Cys920, Cys922–Cys931, Cys934–Cys948, Cys951–Cys963, Cys953–Cys970, Cys972–Cys982, Cys985–Cys999, Cys1002–Cys1014, Cys1004–Cys1021, Cys1023–Cys1032, and Cys1035–Cys1050. 10 Laminin EGF-like domains span residues 518-574, 575-640, 641-693, 694-746, 747-794, 795-846, 847-899, 900-950, 951-1001, and 1002-1052; these read CQCH…NCKP, CQCN…VCKP, CDCD…GCSP, CNCN…GCEP, CQCN…NCKA, CDCD…LCLP, CNCD…HCQM, CECD…GCLP, CSCH…RCQP, and CNCH…GCSK. Asn587 and Asn611 each carry an N-linked (GlcNAc...) asparagine glycan. The N-linked (GlcNAc...) asparagine glycan is linked to Asn650. Residue Asn697 is glycosylated (N-linked (GlcNAc...) asparagine). N-linked (GlcNAc...) asparagine glycosylation is found at Asn839, Asn856, and Asn862. Asn888 carries N-linked (GlcNAc...) asparagine glycosylation. A glycan (N-linked (GlcNAc...) asparagine) is linked at Asn944. The N-linked (GlcNAc...) asparagine glycan is linked to Asn1011. Fibronectin type-III domains follow at residues 1058 to 1146, 1148 to 1244, 1245 to 1363, and 1364 to 1468; these read PPPR…TKPG, PEGN…APPQ, RLSP…SAPV, and FMIP…AAPA. N-linked (GlcNAc...) asparagine glycosylation is found at Asn1071, Asn1151, and Asn1174. N-linked (GlcNAc...) asparagine glycosylation is found at Asn1379, Asn1388, Asn1479, and Asn1635. Laminin G-like domains lie at 1517-1709 and 1714-1891; these read MKGI…WEGC and NEGA…LDGC. A disulfide bond links Cys1672 and Cys1709. An N-linked (GlcNAc...) asparagine glycan is attached at Asn1779. A disulfide bond links Cys1862 and Cys1891. Fibronectin type-III domains lie at 1869 to 1955, 1957 to 2054, 2055 to 2144, 2145 to 2239, 2243 to 2330, 2331 to 2433, 2437 to 2531, 2535 to 2622, 2624 to 2722, 2726 to 2819, 2820 to 2923, 2927 to 3018, 3022 to 3112, and 3113 to 3209; these read TRGA…AAPQ, VPTP…TPQE, APQE…LPPE, HVDS…TDED, GVPA…APPE, GTVN…MPPG, GVLP…TAED, PVVP…TLPG, PEGI…TRPS, GVQP…THPT, VPQN…TLAG, RGAN…TCDG, GMLP…TPSD, and IPTP…CCEE. Residues Asn1903, Asn2011, Asn2014, Asn2048, Asn2130, Asn2182, Asn2195, Asn2258, Asn2285, Asn2322, Asn2377, Asn2382, Asn2407, and Asn2413 are each glycosylated (N-linked (GlcNAc...) asparagine). N-linked (GlcNAc...) asparagine glycosylation is found at Asn2581, Asn2584, Asn2656, Asn2710, Asn2770, and Asn2788. Asn2930, Asn2937, Asn2970, Asn3032, and Asn3099 each carry an N-linked (GlcNAc...) asparagine glycan. 4 N-linked (GlcNAc...) asparagine glycosylation sites follow: Asn3217, Asn3330, Asn3419, and Asn3433. 2 disulfide bridges follow: Cys3371–Cys3444 and Cys3399–Cys3425. Fibronectin type-III domains are found at residues 3403 to 3497, 3501 to 3589, 3592 to 3682, 3684 to 3770, 3774 to 3865, 3866 to 3963, 3964 to 4067, 4068 to 4153, 4157 to 4261, 4262 to 4357, 4358 to 4445, 4446 to 4530, 4534 to 4630, 4636 to 4733, 4734 to 4827, and 4828 to 4927; these read CPAS…TKED, GVSP…TQGV, SILP…AAPE, VWVT…TPMS, EIYP…TPEA, APMD…TLEA, PPQD…SSPS, GLRN…TDEA, SQLA…TLQA, PPEG…AAPS, EVSP…ALPE, NMDS…TSPS, GMEP…TPEI, PPPH…TGPA, PPEG…THPA, and PPSG…SFTT. N-linked (GlcNAc...) asparagine glycans are attached at residues Asn3653, Asn3694, Asn3733, Asn3780, and Asn3849. N-linked (GlcNAc...) asparagine glycosylation is present at Asn3984. 4 N-linked (GlcNAc...) asparagine glycosylation sites follow: Asn4202, Asn4226, Asn4317, and Asn4418. A disordered region spans residues 4518 to 4541; sequence ILSPLVKDRTSPSAPSGMEPPKLQ. Residues Asn4564, Asn4583, Asn4691, Asn4754, and Asn4800 are each glycosylated (N-linked (GlcNAc...) asparagine). Asn4943 and Asn4950 each carry an N-linked (GlcNAc...) asparagine glycan. The helical transmembrane segment at 5043–5063 threads the bilayer; the sequence is FIVLMAMLGLILLAIFLSLIL. Over 5064–5202 the chain is Cytoplasmic; it reads QRKIHKEPYI…ERTTFTDTHL (139 aa). Residues 5200–5202 carry the PDZ-binding motif; sequence THL.

Interacts with collagen IV and fibronectin via its laminin EGF-like domains. Interaction with collagen may be required for stable integration into the basement membrane. Interacts with NINL. Interacts with USH1C. Component of USH2 complex, composed of ADGRV1, PDZD7, USH2A and WHRN. Interacts with ADGRV1/MASS1 (via N-terminal PDZ domain). Interacts (via the cytoplasmic region) with WHRN. Interacts (via the cytoplasmic region) with PDZD7. Interacts (via the cytoplasmic region) with VEZT and MYO7A (via MyTH4-FERM domains); the interaction associates VEZT with the USH2 complex at the stereocilia base. Present in the basement membrane of many, but not all tissues. Expressed in retina, cochlea, small and large intestine, pancreas, bladder, prostate, esophagus, trachea, thymus, salivary glands, placenta, ovary, fallopian tube, uterus and testis. Absent in many other tissues such as heart, lung, liver, kidney and brain. In the retina, it is present in the basement membranes in the Bruch's layer choroid capillary basement membranes, where it localizes just beneath the retinal pigment epithelial cells (at protein level). Weakly expressed. Isoform 2 is expressed in fetal eye, cochlea and heart, and at very low level in brain, CNS, intestine, skeleton, tongue, kidney and lung. Isoform 2 is not expressed in stomach and liver. In adult tissues, isoform 2 is expressed in neural retina and testis, and at low level in brain, heart, kidney and liver. Isoform 1 displays a similar pattern of expression but is expressed at very low level in fetal cochlea.

It is found in the cell projection. The protein localises to the stereocilium membrane. Its subcellular location is the secreted. Its function is as follows. Involved in hearing and vision as member of the USH2 complex. In the inner ear, required for the maintenance of the hair bundle ankle formation, which connects growing stereocilia in developing cochlear hair cells. In retina photoreceptors, the USH2 complex is required for the maintenance of periciliary membrane complex that seems to play a role in regulating intracellular protein transport. This is Usherin (USH2A) from Homo sapiens (Human).